A 507-amino-acid polypeptide reads, in one-letter code: Keratin, type II cuticular Hb5 (507 aa).

The segment at 1–123 (MSCRSYRISS…PNAQCVKQEE (123 aa)) is head. In terms of domain architecture, IF rod spans 123–434 (EKEQIKSLNS…RLLEGEEHRL (312 aa)). Positions 124–158 (KEQIKSLNSRFAAFIDKVRFLEQQNKLLETKWQFY) are coil 1A. The segment at 159–168 (QNQRCCESNL) is linker 1. The coil 1B stretch occupies residues 169–269 (EPLFSGYIET…YEEEIRVLQA (101 aa)). Lys-229 is covalently cross-linked (Glycyl lysine isopeptide (Lys-Gly) (interchain with G-Cter in SUMO1)). Positions 270-286 (HISDTSVIVKMDNSRDL) are linker 12. Positions 287–430 (NMDCIIAEIK…ATYRRLLEGE (144 aa)) are coil 2. A tail region spans residues 431–507 (EHRLCEGVGS…CGSSRSVRFA (77 aa)).

This sequence belongs to the intermediate filament family. As to quaternary structure, heterotetramer of two type I and two type II keratins. In terms of tissue distribution, synthesis occurs immediately above a small population of matrix cells at the base of the hair bulb and the trichocytes lining the dermal papilla and extends upward through the matrix and ends in the lower part of the cortex of the hair shaft.

This chain is Keratin, type II cuticular Hb5 (KRT85), found in Homo sapiens (Human).